A 667-amino-acid polypeptide reads, in one-letter code: tRNA 5-methylaminomethyl-2-thiouridine biosynthesis bifunctional protein MnmC (667 aa).

Residues 1-241 form a tRNA (mnm(5)s(2)U34)-methyltransferase region; the sequence is MHKLTFAQLS…KREMLCGEKA (241 aa). An FAD-dependent cmnm(5)s(2)U34 oxidoreductase region spans residues 268 to 667; that stretch reads VGGGIASLFV…RKWLKGSKVV (400 aa).

This sequence in the N-terminal section; belongs to the methyltransferase superfamily. tRNA (mnm(5)s(2)U34)-methyltransferase family. In the C-terminal section; belongs to the DAO family. Requires FAD as cofactor.

The protein localises to the cytoplasm. It carries out the reaction 5-aminomethyl-2-thiouridine(34) in tRNA + S-adenosyl-L-methionine = 5-methylaminomethyl-2-thiouridine(34) in tRNA + S-adenosyl-L-homocysteine + H(+). In terms of biological role, catalyzes the last two steps in the biosynthesis of 5-methylaminomethyl-2-thiouridine (mnm(5)s(2)U) at the wobble position (U34) in tRNA. Catalyzes the FAD-dependent demodification of cmnm(5)s(2)U34 to nm(5)s(2)U34, followed by the transfer of a methyl group from S-adenosyl-L-methionine to nm(5)s(2)U34, to form mnm(5)s(2)U34. The chain is tRNA 5-methylaminomethyl-2-thiouridine biosynthesis bifunctional protein MnmC from Haemophilus ducreyi (strain 35000HP / ATCC 700724).